The following is a 446-amino-acid chain: Glutamine synthetase (446 aa).

The GS beta-grasp domain occupies Glu18–Gly103. Positions Pro110–Tyr446 constitute a GS catalytic domain. 2 residues coordinate Mg(2+): Glu134 and Glu136. Glu186 is an ATP binding site. 2 residues coordinate Mg(2+): Glu191 and Glu198. L-glutamate contacts are provided by residues Asn242–Gly243 and Gly243. Residue His247 participates in Mg(2+) binding. An ATP-binding site is contributed by Ser251. The L-glutamate site is built by Arg300, Glu306, and Arg318. Arg318 and Arg323 together coordinate ATP. Glu335 serves as a coordination point for Mg(2+). Position 337 (Arg337) interacts with L-glutamate.

This sequence belongs to the glutamine synthetase family. As to quaternary structure, oligomer of 12 subunits arranged in the form of two hexagons. In its feedback-inhibited form, interacts with TnrA in order to block its DNA-binding activity. Mg(2+) is required as a cofactor.

The protein resides in the cytoplasm. It carries out the reaction L-glutamate + NH4(+) + ATP = L-glutamine + ADP + phosphate + H(+). With respect to regulation, inhibited by glutamine. Functionally, glutamine synthetase (GS) is an unusual multitasking protein that functions as an enzyme, a transcription coregulator, and a chaperone in ammonium assimilation and in the regulation of genes involved in nitrogen metabolism. It catalyzes the ATP-dependent biosynthesis of glutamine from glutamate and ammonia. Feedback-inhibited GlnA also interacts with and regulates the activity of the transcriptional regulator TnrA. During nitrogen limitation, TnrA is in its DNA-binding active state and turns on the transcription of genes required for nitrogen assimilation. Under conditions of nitrogen excess, feedback-inhibited GlnA forms a stable complex with TnrA, which inhibits its DNA-binding activity. In contrast, feedback-inhibited GlnA acts as a chaperone to stabilize the DNA-binding activity of GlnR, which represses the transcription of nitrogen assimilation genes. This Staphylococcus aureus (strain MRSA252) protein is Glutamine synthetase.